A 106-amino-acid polypeptide reads, in one-letter code: uncharacterized protein (106 aa).

A run of 2 helical transmembrane segments spans residues 46-68 and 73-92; these read LLQE…ILAF and AVFI…LIAA.

The protein resides in the cell membrane. This is an uncharacterized protein from Bacillus subtilis (strain 168).